The sequence spans 510 residues: Glutamate--tRNA ligase (510 aa).

Positions 15–25 match the 'HIGH' region motif; it reads PSPTGDPHVGT. The short motif at 256–260 is the 'KMSKS' region element; the sequence is KISKR. An ATP-binding site is contributed by Lys-259.

Belongs to the class-I aminoacyl-tRNA synthetase family. Glutamate--tRNA ligase type 1 subfamily. In terms of assembly, monomer.

It is found in the cytoplasm. It catalyses the reaction tRNA(Glu) + L-glutamate + ATP = L-glutamyl-tRNA(Glu) + AMP + diphosphate. In terms of biological role, catalyzes the attachment of glutamate to tRNA(Glu) in a two-step reaction: glutamate is first activated by ATP to form Glu-AMP and then transferred to the acceptor end of tRNA(Glu). In Fusobacterium nucleatum subsp. nucleatum (strain ATCC 25586 / DSM 15643 / BCRC 10681 / CIP 101130 / JCM 8532 / KCTC 2640 / LMG 13131 / VPI 4355), this protein is Glutamate--tRNA ligase.